The chain runs to 243 residues: Uba3-binding protein but1 (243 aa).

The segment at 28–50 (KSTKKRRSSTKDEETRGMHPHIK) is disordered.

As to quaternary structure, homodimer. Interacts with but2 and uba3.

It is found in the nucleus. In terms of biological role, acts as a negative regulator of the NEDD8 pathway. Has a role in meiosis. This chain is Uba3-binding protein but1 (but1), found in Schizosaccharomyces pombe (strain 972 / ATCC 24843) (Fission yeast).